Here is a 407-residue protein sequence, read N- to C-terminus: Nuclear hormone receptor family member nhr-134 (407 aa).

The segment at 11–31 adopts an NR C4-type zinc-finger fold; that stretch reads CEICGQKTSGRHFGVMSCRSC. The segment at 47 to 66 adopts an NR C4-type; degenerate zinc-finger fold; the sequence is RCPNGNCKLLENGKFKCKKC. Residues 157-407 form the NR LBD domain; sequence QFHNSLERLA…FSEPDMFEST (251 aa).

Belongs to the nuclear hormone receptor family.

It localises to the nucleus. Orphan nuclear receptor. This is Nuclear hormone receptor family member nhr-134 (nhr-134) from Caenorhabditis elegans.